The chain runs to 2109 residues: General transcription factor 3C polypeptide 1 (2109 aa).

Residues 467-521 are disordered; that stretch reads LPEGEDTFLSESDSEEERSSSKRRGRGSQKDTRASANLRPKTQPHHSTPTKGGWK. Acidic residues predominate over residues 469–482; it reads EGEDTFLSESDSEE. Lysine 529 is covalently cross-linked (Glycyl lysine isopeptide (Lys-Gly) (interchain with G-Cter in SUMO2)). The disordered stretch occupies residues 586 to 609; it reads MENPKESSSSLKTGRHSSGQDKPH. Phosphoserine is present on serine 667. Residues 718–727 are compositionally biased toward polar residues; the sequence is STANRVKTSQ. Positions 718–775 are disordered; the sequence is STANRVKTSQPPVPQGEAEEDSQGKEGPSGSGDSQLSASSRSESGRMKKSDNKMGITP. The residue at position 739 (serine 739) is a Phosphoserine. Positions 748 to 759 are enriched in low complexity; that stretch reads SGDSQLSASSRS. A compositionally biased stretch (basic and acidic residues) spans 760–769; that stretch reads ESGRMKKSDN. Residues lysine 770 and lysine 833 each participate in a glycyl lysine isopeptide (Lys-Gly) (interchain with G-Cter in SUMO2) cross-link. 2 disordered regions span residues 836 to 857 and 1059 to 1082; these read SGRA…SEAP and RKNS…ESAM. Serine 1062 and serine 1068 each carry phosphoserine. Basic and acidic residues predominate over residues 1073-1082; sequence SLQKEQESAM. A Glycyl lysine isopeptide (Lys-Gly) (interchain with G-Cter in SUMO2) cross-link involves residue lysine 1142. The tract at residues 1202-1241 is disordered; it reads SLDRNRRVRGGKSQKRKRLKKDPGKKIKRKKKGEFPGEKS. The segment covering 1207-1221 has biased composition (basic residues); the sequence is RRVRGGKSQKRKRLK. A phosphoserine mark is found at serine 1253 and serine 1611. A disordered region spans residues 1608–1631; that stretch reads KDGSLEDDEDEEDDLDEGVGGKRR. Positions 1612–1624 are enriched in acidic residues; that stretch reads LEDDEDEEDDLDE. Serine 1632 and serine 1653 each carry phosphoserine. Residues 1823–1833 show a composition bias toward basic and acidic residues; the sequence is EDADIQREDPQ. A disordered region spans residues 1823–1961; it reads EDADIQREDP…GSEDPRGFTE (139 aa). Over residues 1838–1848 the composition is skewed to low complexity; the sequence is EGSSSEDSPPE. 5 positions are modified to phosphoserine: serine 1856, serine 1865, serine 1868, serine 1896, and serine 1911. Over residues 1916 to 1926 the composition is skewed to low complexity; that stretch reads LEDTAAAGAAQ. Residues 1937–1947 are compositionally biased toward polar residues; sequence SPGQEQLSGQA. Residue serine 1969 is modified to Phosphoserine.

It belongs to the TFIIIC subunit 1 family. Part of the TFIIIC subcomplex TFIIIC2, consisting of six subunits, GTF3C1, GTF3C2, GTF3C3, GTF3C4, GTF3C5 and GTF3C6. Interacts with IGHMBP2. Interacts with MAF1.

The protein localises to the nucleus. In terms of biological role, required for RNA polymerase III-mediated transcription. Component of TFIIIC that initiates transcription complex assembly on tRNA and is required for transcription of 5S rRNA and other stable nuclear and cytoplasmic RNAs. Binds to the box B promoter element. This is General transcription factor 3C polypeptide 1 (GTF3C1) from Homo sapiens (Human).